A 750-amino-acid chain; its full sequence is Serine/threonine-protein kinase PknG (750 aa).

Residues 1 to 66 (MAKASETERS…PQDRMATTSR (66 aa)) form a disordered region. The span at 17–34 (ADAQTATSATVRPLSTQA) shows a compositional bias: polar residues. The Protein kinase domain occupies 151 to 396 (YEVKGCIAHG…EMSAQLTGVL (246 aa)). Residues 157 to 165 (IAHGGLGWI) and Lys-181 each bind ATP. The active-site Proton acceptor is Asp-276.

This sequence belongs to the protein kinase superfamily. Ser/Thr protein kinase family. Post-translationally, autophosphorylated.

It catalyses the reaction L-seryl-[protein] + ATP = O-phospho-L-seryl-[protein] + ADP + H(+). It carries out the reaction L-threonyl-[protein] + ATP = O-phospho-L-threonyl-[protein] + ADP + H(+). In Mycobacterium bovis (strain ATCC BAA-935 / AF2122/97), this protein is Serine/threonine-protein kinase PknG (pknG).